The sequence spans 279 residues: Putative carbamate hydrolase RutD (279 aa).

Residues 23–126 (PVVVLISGLG…LVSVNGWLRI (104 aa)) enclose the AB hydrolase-1 domain.

It belongs to the AB hydrolase superfamily. Hydrolase RutD family.

It catalyses the reaction carbamate + 2 H(+) = NH4(+) + CO2. Functionally, involved in pyrimidine catabolism. May facilitate the hydrolysis of carbamate, a reaction that can also occur spontaneously. This is Putative carbamate hydrolase RutD from Escherichia coli O17:K52:H18 (strain UMN026 / ExPEC).